We begin with the raw amino-acid sequence, 395 residues long: MEKKLKRRESMSTTAAESPPAKRRRTVTGNENSALIEGLPDHISEICLSLVHRPSLLSAVCTRWRRLLYSPEFPSFPSLYALFVDSTSDTGRVNPSVRFMCFNPVSSKWYPLPPPPPDPPLHRILYRHPSFISFNLPIQCVSAAGKLILIAGSNQQLSPAISHPLIFDPISSSWSSGPRIGSPRRWCATGACDGAIYIASGISSQFSSTVAKSVEKLDLTEQNRNNHRFNWEKLRDMRDLRFSREAIDAVGYRRKLLMVNVKGDAVKEGAIYDVVKDDWEPMPEEMLVGWRGPVAAMEEEILYSVDERRGTVRKYDDEKREWREVVVVEGGEEMLKGATQVTADSGKLCVVTGDGKIVVVDVAAEPAKIWNVEIPDGLEPVSVHVLPRMSQPNFC.

The segment at 1–29 is disordered; sequence MEKKLKRRESMSTTAAESPPAKRRRTVTG. In terms of domain architecture, F-box spans 34-79; sequence ALIEGLPDHISEICLSLVHRPSLLSAVCTRWRRLLYSPEFPSFPSL. 5 Kelch repeats span residues 81-129, 147-194, 196-245, 246-299, and 301-342; these read ALFV…YRHP, LILI…ACDG, IYIA…FSRE, AIDA…AMEE, and ILYS…TQVT.

Part of a SCF (ASK-cullin-F-box) protein ligase complex. Interacts with SKP1A/ASK1.

The protein localises to the nucleus. It functions in the pathway protein modification; protein ubiquitination. Functionally, component of SCF(ASK-cullin-F-box) E3 ubiquitin ligase complexes, which may mediate the ubiquitination and subsequent proteasomal degradation of target proteins. This Arabidopsis thaliana (Mouse-ear cress) protein is F-box/kelch-repeat protein SKIP25 (SKIP25).